A 1438-amino-acid polypeptide reads, in one-letter code: DNA polymerase III PolC-type (1438 aa).

One can recognise an Exonuclease domain in the interval 422–578 (YVVFDVETTG…YDTEATAYMF (157 aa)).

It belongs to the DNA polymerase type-C family. PolC subfamily.

The protein resides in the cytoplasm. The enzyme catalyses DNA(n) + a 2'-deoxyribonucleoside 5'-triphosphate = DNA(n+1) + diphosphate. Required for replicative DNA synthesis. This DNA polymerase also exhibits 3' to 5' exonuclease activity. The polypeptide is DNA polymerase III PolC-type (Staphylococcus saprophyticus subsp. saprophyticus (strain ATCC 15305 / DSM 20229 / NCIMB 8711 / NCTC 7292 / S-41)).